We begin with the raw amino-acid sequence, 407 residues long: Substance-P receptor (407 aa).

Topologically, residues methionine 1–glutamine 31 are extracellular. 2 N-linked (GlcNAc...) asparagine glycosylation sites follow: asparagine 14 and asparagine 18. A helical membrane pass occupies residues isoleucine 32–methionine 54. Topologically, residues tryptophan 55 to arginine 64 are cytoplasmic. A helical transmembrane segment spans residues threonine 65–threonine 86. Topologically, residues valine 87–lysine 106 are extracellular. Residues cysteine 105 and cysteine 180 are joined by a disulfide bond. Residues phenylalanine 107–phenylalanine 128 traverse the membrane as a helical segment. Residues aspartate 129–lysine 148 are Cytoplasmic-facing. A helical transmembrane segment spans residues valine 149–serine 169. The Extracellular segment spans residues threonine 170–lysine 194. The chain crosses the membrane as a helical span at residues valine 195–valine 219. Histidine 197 lines the CP-96345 pocket. Residues glycine 220–lysine 248 are Cytoplasmic-facing. The chain crosses the membrane as a helical span at residues methionine 249–leucine 270. Residues proline 271–isoleucine 283 are Extracellular-facing. A helical membrane pass occupies residues glutamine 284–leucine 308. The Cytoplasmic segment spans residues asparagine 309–serine 407. The S-palmitoyl cysteine moiety is linked to residue cysteine 322. The tract at residues alanine 364–serine 407 is disordered. Residues threonine 376–serine 407 are compositionally biased toward polar residues.

This sequence belongs to the G-protein coupled receptor 1 family. Interacts with ARRB1.

The protein localises to the cell membrane. Functionally, this is a receptor for the tachykinin neuropeptide substance P. It is probably associated with G proteins that activate a phosphatidylinositol-calcium second messenger system. The rank order of affinity of this receptor to tachykinins is: substance P &gt; substance K &gt; neuromedin-K. In Homo sapiens (Human), this protein is Substance-P receptor (TACR1).